The primary structure comprises 50 residues: Mating-type pheromone BAP1(1) (50 aa).

Residues 1-32 (MDGEGHDINIWGARMSPSPAAAPVSATRGAPW) form a disordered region. Over residues 16–26 (SPSPAAAPVSA) the composition is skewed to low complexity. Residue cysteine 47 is modified to Cysteine methyl ester. Cysteine 47 carries S-farnesyl cysteine lipidation. The propeptide at 48 to 50 (VCH) is removed in mature form.

The protein resides in the cell membrane. Functionally, activates B-regulated development. The sequence is that of Mating-type pheromone BAP1(1) (BAP1(1)) from Schizophyllum commune (Split gill fungus).